We begin with the raw amino-acid sequence, 499 residues long: Putative sperm motility kinase W (499 aa).

The Protein kinase domain occupies 14 to 262 (YKVLFTLGHG…IEDIERHPWV (249 aa)). Residues 20–28 (LGHGSFGTV) and Lys43 contribute to the ATP site. Asp133 serves as the catalytic Proton acceptor. The UBA domain maps to 274–314 (DPDYNIIEMLCGMGFDANEILESLQRKKYNESMGAYLILKA).

This sequence belongs to the protein kinase superfamily. CAMK Ser/Thr protein kinase family. Smok subfamily.

The enzyme catalyses L-seryl-[protein] + ATP = O-phospho-L-seryl-[protein] + ADP + H(+). It carries out the reaction L-threonyl-[protein] + ATP = O-phospho-L-threonyl-[protein] + ADP + H(+). Its function is as follows. May play a role in sperm motility, especially in the regulation of flagellar function. The protein is Putative sperm motility kinase W of Mus musculus (Mouse).